The primary structure comprises 353 residues: D-alanine--D-alanine ligase (353 aa).

One can recognise an ATP-grasp domain in the interval K141 to D349. ATP is bound at residue E176–E231. The Mg(2+) site is built by D302, E316, and N318.

It belongs to the D-alanine--D-alanine ligase family. The cofactor is Mg(2+). Mn(2+) serves as cofactor.

It localises to the cytoplasm. The catalysed reaction is 2 D-alanine + ATP = D-alanyl-D-alanine + ADP + phosphate + H(+). The protein operates within cell wall biogenesis; peptidoglycan biosynthesis. In terms of biological role, cell wall formation. The sequence is that of D-alanine--D-alanine ligase from Synechococcus sp. (strain WH7803).